The chain runs to 475 residues: Aspartyl/glutamyl-tRNA(Asn/Gln) amidotransferase subunit B (475 aa).

This sequence belongs to the GatB/GatE family. GatB subfamily. In terms of assembly, heterotrimer of A, B and C subunits.

The catalysed reaction is L-glutamyl-tRNA(Gln) + L-glutamine + ATP + H2O = L-glutaminyl-tRNA(Gln) + L-glutamate + ADP + phosphate + H(+). It catalyses the reaction L-aspartyl-tRNA(Asn) + L-glutamine + ATP + H2O = L-asparaginyl-tRNA(Asn) + L-glutamate + ADP + phosphate + 2 H(+). In terms of biological role, allows the formation of correctly charged Asn-tRNA(Asn) or Gln-tRNA(Gln) through the transamidation of misacylated Asp-tRNA(Asn) or Glu-tRNA(Gln) in organisms which lack either or both of asparaginyl-tRNA or glutaminyl-tRNA synthetases. The reaction takes place in the presence of glutamine and ATP through an activated phospho-Asp-tRNA(Asn) or phospho-Glu-tRNA(Gln). In Staphylococcus haemolyticus (strain JCSC1435), this protein is Aspartyl/glutamyl-tRNA(Asn/Gln) amidotransferase subunit B.